Here is an 85-residue protein sequence, read N- to C-terminus: Protein RALF-like 28 (85 aa).

Positions 1–31 (MSILKETKRFMVVAMFIACVFISNNMNVAVA) are cleaved as a signal peptide. Intrachain disulfides connect Cys48–Cys53 and Cys66–Cys72. The interval 60-85 (NPYHRGCEKSKRCRGPDPPALPRKMI) is disordered. Residues 75-85 (PDPPALPRKMI) are compositionally biased toward pro residues.

The protein belongs to the plant rapid alkalinization factor (RALF) family.

The protein localises to the secreted. Cell signaling peptide that may regulate plant stress, growth, and development. Mediates a rapid alkalinization of extracellular space by mediating a transient increase in the cytoplasmic Ca(2+) concentration leading to a calcium-dependent signaling events through a cell surface receptor and a concomitant activation of some intracellular mitogen-activated protein kinases. This Arabidopsis thaliana (Mouse-ear cress) protein is Protein RALF-like 28 (RALFL28).